We begin with the raw amino-acid sequence, 362 residues long: C-C chemokine receptor type 10 (362 aa).

Residues 1-52 lie on the Extracellular side of the membrane; it reads MGTEATEQVSWGHYSGDEEDAYSAEPLPELCYKADVQAFSRAFQPSVSLTVA. Residues 53 to 68 traverse the membrane as a helical segment; the sequence is ALGLAGNGLVLATHLA. The Cytoplasmic segment spans residues 69–78; that stretch reads ARRAARSPTS. Residues 79–99 traverse the membrane as a helical segment; the sequence is AHLLQLALADLLLALTLPFAA. Topologically, residues 100-114 are extracellular; the sequence is AGALQGWSLGSATCR. Residues Cys-113 and Cys-191 are joined by a disulfide bond. The helical transmembrane segment at 115 to 136 threads the bilayer; it reads TISGLYSASFHAGFLFLACISA. Over 137 to 159 the chain is Cytoplasmic; it reads DRYVAIARALPAGPRPSTPGRAH. A helical transmembrane segment spans residues 160–179; it reads LVSVIVWLLSLLLALPALLF. Residues 180-203 are Extracellular-facing; the sequence is SQDGQREGQRRCRLIFPEGLTQTV. Residues 204–225 traverse the membrane as a helical segment; it reads KGASAVAQVALGFALPLGVMVA. The Cytoplasmic segment spans residues 226–247; sequence CYALLGRTLLAARGPERRRALR. A helical membrane pass occupies residues 248–269; it reads VVVALVAAFVVLQLPYSLALLL. Over 270-290 the chain is Extracellular; it reads DTADLLAARERSCPASKRKDV. A helical membrane pass occupies residues 291–313; it reads ALLVTSGLALARCGLNPVLYAFL. The Cytoplasmic segment spans residues 314–362; the sequence is GLRFRQDLRRLLRGGSCPSGPQPRRGCPRRPRLSSCSAPTETHSLSWDN. A compositionally biased stretch (low complexity) spans 328–338; it reads GSCPSGPQPRR. A disordered region spans residues 328–362; sequence GSCPSGPQPRRGCPRRPRLSSCSAPTETHSLSWDN. The span at 351–362 shows a compositional bias: polar residues; that stretch reads APTETHSLSWDN.

This sequence belongs to the G-protein coupled receptor 1 family. As to expression, expressed at high levels in adult testis, small intestine, fetal lung, fetal kidney. Weaker expression was observed in many other adult tissues including spleen, thymus, lymph node, Peyer patches, colon, heart, ovary, peripheral blood lymphocytes, thyroid and spinal cord. Also expressed by melanocytes, dermal fibroblasts, dermal microvascular endothelial cells. Also detected in T-cells and in skin-derived Langerhans cells.

Its subcellular location is the cell membrane. Functionally, receptor for chemokines SCYA27 and SCYA28. Subsequently transduces a signal by increasing the intracellular calcium ions level and stimulates chemotaxis in a pre-B cell line. The protein is C-C chemokine receptor type 10 (CCR10) of Homo sapiens (Human).